Consider the following 103-residue polypeptide: V-type sodium ATPase subunit G (103 aa).

The protein belongs to the V-ATPase F subunit family.

In terms of biological role, involved in ATP-driven sodium extrusion. The chain is V-type sodium ATPase subunit G (ntpG) from Enterococcus hirae (strain ATCC 9790 / DSM 20160 / JCM 8729 / LMG 6399 / NBRC 3181 / NCIMB 6459 / NCDO 1258 / NCTC 12367 / WDCM 00089 / R).